The chain runs to 377 residues: Peptide chain release factor 2 (377 aa).

Gln257 carries the N5-methylglutamine modification.

Belongs to the prokaryotic/mitochondrial release factor family. Post-translationally, methylated by PrmC. Methylation increases the termination efficiency of RF2.

The protein resides in the cytoplasm. Functionally, peptide chain release factor 2 directs the termination of translation in response to the peptide chain termination codons UGA and UAA. The sequence is that of Peptide chain release factor 2 from Lactiplantibacillus plantarum (strain ATCC BAA-793 / NCIMB 8826 / WCFS1) (Lactobacillus plantarum).